The chain runs to 401 residues: Adenylosuccinate synthetase (401 aa).

GTP contacts are provided by residues 12–18 (GDEGKGK) and 40–42 (GHT). Aspartate 13 functions as the Proton acceptor in the catalytic mechanism. Residues aspartate 13 and glycine 40 each coordinate Mg(2+). IMP-binding positions include 13–16 (DEGK), 38–41 (NAGH), threonine 128, arginine 142, glutamine 212, threonine 227, and arginine 290. The active-site Proton donor is the histidine 41. A substrate-binding site is contributed by 286–292 (ATTRRPR). Residues arginine 292, 318-320 (KAD), and 390-392 (STG) each bind GTP.

This sequence belongs to the adenylosuccinate synthetase family. In terms of assembly, homodimer. Requires Mg(2+) as cofactor.

Its subcellular location is the cytoplasm. It catalyses the reaction IMP + L-aspartate + GTP = N(6)-(1,2-dicarboxyethyl)-AMP + GDP + phosphate + 2 H(+). It participates in purine metabolism; AMP biosynthesis via de novo pathway; AMP from IMP: step 1/2. Its function is as follows. Plays an important role in the de novo pathway of purine nucleotide biosynthesis. Catalyzes the first committed step in the biosynthesis of AMP from IMP. The protein is Adenylosuccinate synthetase of Pseudothermotoga lettingae (strain ATCC BAA-301 / DSM 14385 / NBRC 107922 / TMO) (Thermotoga lettingae).